The primary structure comprises 94 residues: Co-chaperonin GroES (94 aa).

The protein belongs to the GroES chaperonin family. In terms of assembly, heptamer of 7 subunits arranged in a ring. Interacts with the chaperonin GroEL.

Its subcellular location is the cytoplasm. Together with the chaperonin GroEL, plays an essential role in assisting protein folding. The GroEL-GroES system forms a nano-cage that allows encapsulation of the non-native substrate proteins and provides a physical environment optimized to promote and accelerate protein folding. GroES binds to the apical surface of the GroEL ring, thereby capping the opening of the GroEL channel. This Lactococcus lactis subsp. cremoris (strain SK11) protein is Co-chaperonin GroES.